The sequence spans 39 residues: Photosystem II reaction center protein J (39 aa).

The chain crosses the membrane as a helical span at residues 7–27; the sequence is IPLWIVATVAGTGALVVVGLF.

Belongs to the PsbJ family. In terms of assembly, PSII is composed of 1 copy each of membrane proteins PsbA, PsbB, PsbC, PsbD, PsbE, PsbF, PsbH, PsbI, PsbJ, PsbK, PsbL, PsbM, PsbT, PsbX, PsbY, PsbZ, Psb30/Ycf12, peripheral proteins PsbO, CyanoQ (PsbQ), PsbU, PsbV and a large number of cofactors. It forms dimeric complexes.

It localises to the cellular thylakoid membrane. Functionally, one of the components of the core complex of photosystem II (PSII). PSII is a light-driven water:plastoquinone oxidoreductase that uses light energy to abstract electrons from H(2)O, generating O(2) and a proton gradient subsequently used for ATP formation. It consists of a core antenna complex that captures photons, and an electron transfer chain that converts photonic excitation into a charge separation. The protein is Photosystem II reaction center protein J of Synechococcus sp. (strain ATCC 27144 / PCC 6301 / SAUG 1402/1) (Anacystis nidulans).